The sequence spans 523 residues: tRNA-2-methylthio-N(6)-dimethylallyladenosine synthase (523 aa).

Positions 1-26 are disordered; sequence MNEKQRLEQTGQIQTASHPADRKSDL. A compositionally biased stretch (polar residues) spans 8 to 17; that stretch reads EQTGQIQTAS. The MTTase N-terminal domain occupies 80–198; that stretch reads RKFYIRTYGC…LPYILHEAYM (119 aa). 6 residues coordinate [4Fe-4S] cluster: cysteine 89, cysteine 125, cysteine 159, cysteine 235, cysteine 239, and cysteine 242. In terms of domain architecture, Radical SAM core spans 221-451; the sequence is RKGNIKAWVN…NALVQEIAAK (231 aa). A TRAM domain is found at 454 to 517; it reads KQYEGQVVEV…TWTLTGELAN (64 aa).

It belongs to the methylthiotransferase family. MiaB subfamily. Monomer. Requires [4Fe-4S] cluster as cofactor.

It is found in the cytoplasm. It carries out the reaction N(6)-dimethylallyladenosine(37) in tRNA + (sulfur carrier)-SH + AH2 + 2 S-adenosyl-L-methionine = 2-methylsulfanyl-N(6)-dimethylallyladenosine(37) in tRNA + (sulfur carrier)-H + 5'-deoxyadenosine + L-methionine + A + S-adenosyl-L-homocysteine + 2 H(+). Its function is as follows. Catalyzes the methylthiolation of N6-(dimethylallyl)adenosine (i(6)A), leading to the formation of 2-methylthio-N6-(dimethylallyl)adenosine (ms(2)i(6)A) at position 37 in tRNAs that read codons beginning with uridine. The chain is tRNA-2-methylthio-N(6)-dimethylallyladenosine synthase from Geobacillus thermodenitrificans (strain NG80-2).